Consider the following 167-residue polypeptide: NADH-ubiquinone oxidoreductase chain 6 (167 aa).

4 helical membrane-spanning segments follow: residues 24-44 (PYFGALGLIVVSLVGCLIILA), 54-74 (LLLIYLGGMMVVFSYCTALVL), 85-105 (VLMKMALGVLVVVFLGYGGYL), and 135-155 (WLLIVFGCLGLFLALLVILEI).

Belongs to the complex I subunit 6 family.

The protein resides in the mitochondrion membrane. It catalyses the reaction a ubiquinone + NADH + 5 H(+)(in) = a ubiquinol + NAD(+) + 4 H(+)(out). Its function is as follows. Core subunit of the mitochondrial membrane respiratory chain NADH dehydrogenase (Complex I) that is believed to belong to the minimal assembly required for catalysis. Complex I functions in the transfer of electrons from NADH to the respiratory chain. The immediate electron acceptor for the enzyme is believed to be ubiquinone. This is NADH-ubiquinone oxidoreductase chain 6 (MT-ND6) from Myxine glutinosa (Atlantic hagfish).